A 74-amino-acid polypeptide reads, in one-letter code: Large ribosomal subunit protein bL31 (74 aa).

Residues cysteine 16, cysteine 18, cysteine 38, and cysteine 41 each coordinate Zn(2+).

It belongs to the bacterial ribosomal protein bL31 family. Type A subfamily. Part of the 50S ribosomal subunit. Zn(2+) serves as cofactor.

Binds the 23S rRNA. The chain is Large ribosomal subunit protein bL31 from Acinetobacter baylyi (strain ATCC 33305 / BD413 / ADP1).